A 1343-amino-acid polypeptide reads, in one-letter code: uncharacterized protein (1343 aa).

A helical membrane pass occupies residues 432–449; that stretch reads LYVYFVTTKTGVVAFSLL.

It belongs to the IIV-6 295L family.

It localises to the membrane. This is an uncharacterized protein from Acheta domesticus (House cricket).